The following is a 347-amino-acid chain: Protein RecA (347 aa).

Residue 66–73 participates in ATP binding; the sequence is GPESSGKT.

Belongs to the RecA family.

It is found in the cytoplasm. Functionally, can catalyze the hydrolysis of ATP in the presence of single-stranded DNA, the ATP-dependent uptake of single-stranded DNA by duplex DNA, and the ATP-dependent hybridization of homologous single-stranded DNAs. It interacts with LexA causing its activation and leading to its autocatalytic cleavage. This Allochromatium vinosum (Chromatium vinosum) protein is Protein RecA.